The following is a 577-amino-acid chain: Arginine--tRNA ligase (577 aa).

The short motif at 122–132 is the 'HIGH' region element; sequence PNVAKEMHVGH.

This sequence belongs to the class-I aminoacyl-tRNA synthetase family. As to quaternary structure, monomer.

The protein localises to the cytoplasm. It catalyses the reaction tRNA(Arg) + L-arginine + ATP = L-arginyl-tRNA(Arg) + AMP + diphosphate. This chain is Arginine--tRNA ligase, found in Klebsiella pneumoniae (strain 342).